A 74-amino-acid chain; its full sequence is Putative membrane protein insertion efficiency factor (74 aa).

It belongs to the UPF0161 family.

Its subcellular location is the cell inner membrane. Its function is as follows. Could be involved in insertion of integral membrane proteins into the membrane. The protein is Putative membrane protein insertion efficiency factor of Leptospira interrogans serogroup Icterohaemorrhagiae serovar copenhageni (strain Fiocruz L1-130).